Reading from the N-terminus, the 62-residue chain is Amolopin-P2 (62 aa).

A signal peptide spans 1-22 (MFTLKKSLLLLFFLGTISLSLC). Residues 23–44 (EQERGADEEENGGEVTEQEVKR) constitute a propeptide that is removed on maturation.

It belongs to the frog skin active peptide (FSAP) family. Amolopin subfamily. In terms of tissue distribution, expressed by the skin glands.

The protein resides in the secreted. Functionally, antimicrobial peptide with activity against Gram-positive bacteria. Has been tested against S.aureus (MIC=37.5 ug/mL), against B.pumilus (MIC=75.0 ug/mL), B.cereus (no activity detected). Does not show activity against Gram-negative bacteria (E.coli, B.dysenteriae, A.calcoaceticus, P.aeruginosa) and fungi (C.albicans). Does not show hemolytic activity against rabbit erythrocytes. The polypeptide is Amolopin-P2 (Amolops loloensis (Lolokou Sucker Frog)).